The chain runs to 246 residues: Probable transcriptional regulatory protein AHA_1522 (246 aa).

This sequence belongs to the TACO1 family.

The protein resides in the cytoplasm. The polypeptide is Probable transcriptional regulatory protein AHA_1522 (Aeromonas hydrophila subsp. hydrophila (strain ATCC 7966 / DSM 30187 / BCRC 13018 / CCUG 14551 / JCM 1027 / KCTC 2358 / NCIMB 9240 / NCTC 8049)).